We begin with the raw amino-acid sequence, 373 residues long: MVEGIVFEHVSKKFADSIALNDVSFAINKGEFFSLLGPSGCGKTTLLRILAGFEKPDQGRILLDGQDITKLPANKRPINTVFQNYALFPHLTIWENIAFGLRIAQRSETEIKREVEQMLGLIQMKEHGHKKPDQISGGQKQRVAIARALVNHPRILLLDEPLAALDLKLRQKMLLDLDRIHDEVGITFIFVTHDQSEAMAVSDRIAVLHKGSLEQIGNPIEIYEMPKSSFVADFIGDTNFFDGWVKETAQKEYSLVDVEGFPQIYCFNDKQLSKGDAVHLSVRPEKIHISREQIQAHPLQNVFQGIVDDVIYKGDHTHFGIQVGDRKISVNQQHSRFLLDEAPIKWKDVVWIWWHSDDGFILERCQKLENNNE.

In terms of domain architecture, ABC transporter spans 5–235 (IVFEHVSKKF…PKSSFVADFI (231 aa)). Residue 37-44 (GPSGCGKT) coordinates ATP.

The protein belongs to the ABC transporter superfamily. Spermidine/putrescine importer (TC 3.A.1.11.1) family. The complex is composed of two ATP-binding proteins (PotA), two transmembrane proteins (PotB and PotC) and a solute-binding protein (PotD).

It localises to the cell inner membrane. It catalyses the reaction ATP + H2O + polyamine-[polyamine-binding protein]Side 1 = ADP + phosphate + polyamineSide 2 + [polyamine-binding protein]Side 1.. Its function is as follows. Part of the ABC transporter complex PotABCD involved in spermidine/putrescine import. Responsible for energy coupling to the transport system. In Protochlamydia amoebophila (strain UWE25), this protein is Spermidine/putrescine import ATP-binding protein PotA.